Here is a 2227-residue protein sequence, read N- to C-terminus: MNMSRQGIFQTVGSGLDHILSLADIEEEQMIQSVDRTAVTGASYFTSVDQSSVHTAEVGSHQVEPLKTSVDKPGSKKTQGEKFFLIHSADWLTTHALFHEVAKLDVVKLLYNEQFAVQGLLRYHTYARFGIEIQVQINPTPFQQGGLICAMVPGDQSYGSIASLTVYPHGLLNCNINNVVRIKVPFIYTRGAYHFKDPQYPVWELTIRVWSELNIGTGTSAYTSLNVLARFTDLELHGLTPLSTQMMRNEFRVSTTENVVNLSNYEDARAKMSFALDQEDWKSDPSQGGRIKITHFTTWTSIPTLAAQFPFNASDSVGQQIKVIPVDPYFFQMTNSNPDQKCITALASICQMFCFWRGDLVFDFQVFPTKYHSGRLLFCFVPGNELIDVSGITLKQATTAPCAVMDITGVQSTLRFRVPWISDTPYRVNRYTKSAHQKGEYTAIGKLIVYCYNRLTSPSNVASHVRVNVYLSAINLECFAPLYHAMDVTTQVGDDSGGFSTTVSTEQNVPDPQVGITTMRDLKGRANRGKMDVSGVQAPVGAITTIEDPVLAKKVPETFPELKPGESRHTSDHMSIYKFMGRSHFLCTFTFNSNNKEYTFPITLSSTSNPPHGLPSTLRWFFNLFQLYRGPLDLTIIITGATDVDGMAWFTPVGLAVDTPWVEKESALSIDYKTALGAVRFNTRRTGNIQIRLPWYSYLYAVSGALDGLGDKTDSTFGLVSIQIANYNHSDEYLSFSCYLSVTEQSEFYFPRAPLNSNAMLSTETMMSRIAAGDLESSVDDPRSEEDRRFESHIESRKPYKELRLEVGKQRLKYAQEELSNEVLPPPRKMKGLFSQAKISLFYTEDHEIMKFSWRGVTADTRALRRFGFSLAAGRSVWTLEMDAGVLTGRLVRLNDEKWTEMKDDKIVSLVEKFTSNKHWSKVNFPHGMLDLEEIAANSKDFPNMSETDLCFLLHWLNPKKINLADRMLGLSGVQEIKEQGIGLIAECRTFLDSIAGTLKSMMFGFHHSVTVEIINTVLCFVKSGILLYVVQQLNQDEHSHIIGLLRVMNYADIGCSVISCGKVFSKMLETVFNWQMDSRMMELRTQSFSNWLRDICSGITIFKSFKDAIYWLYTKLKDFYDVNYGKKKDVLNVLKDNQQKIERAIEEADNFCILQIQDVEKFEQYQKGVDLIQKLRTVHSMAQVDPSLMIHLSPLRDCIARVHQKLKNLGSINQAMVTRCEPVVCYLYGKRGGGKSLTSIALATKICKHYGVEPEKNIYTKPVASDYWDGYSGQLVCIIDDIGQNTTDEDWSDFCQLVSGCPMRLNMASLEEKGRHFSSPFIIATSNWSNPSPKTVYVKEAIDRRLHFKIEVKPASFFKNPHNDMLNVNLAKTNDAIKDMSCVDLIMDGHNVSLMDLLSSLVMTVEIRKQNMTEFMELWSQGISDDDNDSAVAEFFQSFPSGEPSNSKLSSFFQSVTNHKWVAVGAAVGILGVLVGGWFVYKHFSRKEEEPIPTEGVYHGVTKPKQVIKLDADPVESQSTLEIAGLVRKNLVQFGVGEKNGCVRWVMNALGVKDDWLLVPSHAYKFEKDYEMMEFYFNRGGTYYSISAGNVVIQSLDVGFQDVVLMKVPTIPNFRDITEHFIKKGDVPRALNRLATFGQPVNGTPMLISEGPLKMEEKATYVHKKNDGTTVDLTVDQAWRGKGEGLPGMCGGALVSSNQSIQNAILGIHVAGGNSILVAKLVTQEMFQNIDKKIESQRIMKVEFTQCSMNVVSKTLFRKSPIHHHIDKDMINFPAAMPFSRAEIDPMAVMLSKYSLPMVEEPEGYKDVSVFFQNKVMGKSVLVDDFLDLDMAITGAPGIDAINMDSSPGFPYVQERLTKRDLIWLDENGLLLGIHPRLAQRILFNTVMMENCSDLDVIFTTCPKDELRPLDKVLESKTRAIDACPLDYTILCRMYWGPAISYFHLNPGFHTGVAIGIDPDRQWDELFKTMIRFGDVGLDLDFSAFDASLSPFMIREAGRIMSEISGTPSHFGTALINTIIYSKHLLYNCCYHVYGSMPSGSPCTALLNSIINNINLYYVFSKIFRKSPVFFSQAVRILCYGDDVLIVFSRDIQIDNLDQIGQKIVHEFKQLGMTATSADKTVPQLKPVSELTFLKRSFNLVEDRVRPAISEKTIWSLVAWQRSNAEFEQNLENAQWFAFMHGFEFYQKFYYFVQSCLEKEMIEYRLKSYDWWRMRFYDQCFVCDLS.

Short sequence motifs ((L)YPX(n)L motif) lie at residues 167–171 (YPHGL) and 200–205 (YPVWEL). Residues 766–836 (MMSRIAAGDL…PRKMKGLFSQ (71 aa)) form an involved in P1-2A pentamerization region. Residues 1010–1030 (VTVEIINTVLCFVKSGILLYV) form a helical membrane-spanning segment. The membrane-penetrating ability stretch occupies residues 1043–1070 (IGLLRVMNYADIGCSVISCGKVFSKMLE). Residues 1127–1152 (KKKDVLNVLKDNQQKIERAIEEADNF) adopt a coiled-coil conformation. Residues 1204–1366 (HQKLKNLGSI…SFFKNPHNDM (163 aa)) form the SF3 helicase domain. 1230–1237 (GKRGGGKS) contacts ATP. Residues 1462–1482 (WVAVGAAVGILGVLVGGWFVY) traverse the membrane as a helical segment. The residue at position 1499 (Tyr1499) is an O-(5'-phospho-RNA)-tyrosine. Residues 1514-1728 (DPVESQSTLE…VAKLVTQEMF (215 aa)) enclose the Peptidase C3 domain. Residues His1563, Asp1603, and Cys1691 each act as for protease 3C activity in the active site. One can recognise a RdRp catalytic domain in the interval 1976-2097 (DVGLDLDFSA…VFSRDIQIDN (122 aa)). The active-site For RdRp activity is the Asp2083.

Belongs to the picornaviridae polyprotein family. Homodimer. Homomultimer; probably interacts with membranes in a multimeric form. Seems to assemble into amyloid-like fibers. In terms of assembly, homodimer. Monomer. Interacts with protein 3CD. As to quaternary structure, interacts with host ACBD3. Interacts with protein 3AB. In terms of assembly, interacts with human MAVS. As to quaternary structure, homodimer; disulfide-linked. Homopentamer. Homooligomer. In terms of assembly, interacts with capsid protein VP2. Interacts with capsid protein VP3. As to quaternary structure, interacts with capsid protein VP1. Interacts with capsid protein VP3. Interacts with capsid protein VP1. Interacts with capsid protein VP2. Specific enzymatic cleavages by viral protease in vivo yield a variety of precursors and mature proteins. Polyprotein processing intermediates are produced, such as P1-2A which is a functional precursor of the structural proteins, VP0 which is a VP4-VP2 precursor, VP1-2A precursor, 3ABC precursor which is a stable and catalytically active precursor of 3A, 3B and 3C proteins, 3AB and 3CD precursors. The assembly signal 2A is removed from VP1-2A by a host protease, possibly host Cathepsin L. This cleavage occurs over a region of 3 amino-acids probably generating VP1 proteins with heterogeneous C-termini. In terms of processing, during virion maturation, immature virions are rendered infectious following cleavage of VP0 into VP4 and VP2. This maturation seems to be an autocatalytic event triggered by the presence of RNA in the capsid and is followed by a conformational change of the particle. Post-translationally, the assembly signal 2A is removed from VP1-2A by a host protease, possibly host Cathepsin L in naked virions. This cleavage does not occur in enveloped virions. This cleavage occurs over a region of 3 amino-acids probably generating VP1 proteins with heterogeneous C-termini. VPg is uridylylated prior to priming replication into VPg-pUpU. In terms of processing, unlike other picornaviruses, does not seem to be myristoylated.

It is found in the virion. It localises to the host endosome. Its subcellular location is the host multivesicular body. The protein resides in the host membrane. The protein localises to the host mitochondrion outer membrane. It is found in the host cytoplasm. It localises to the host cytoplasmic vesicle membrane. It catalyses the reaction RNA(n) + a ribonucleoside 5'-triphosphate = RNA(n+1) + diphosphate. It carries out the reaction a ribonucleoside 5'-triphosphate + H2O = a ribonucleoside 5'-diphosphate + phosphate + H(+). The catalysed reaction is Selective cleavage of Gln-|-Gly bond in the poliovirus polyprotein. In other picornavirus reactions Glu may be substituted for Gln, and Ser or Thr for Gly.. Its function is as follows. Capsid proteins VP1, VP2, and VP3 form a closed capsid enclosing the viral positive strand RNA genome. All these proteins contain a beta-sheet structure called beta-barrel jelly roll. Together they form an icosahedral capsid (T=3) composed of 60 copies of each VP1, VP2, and VP3, with a diameter of approximately 300 Angstroms. VP1 is situated at the 12 fivefold axes, whereas VP2 and VP3 are located at the quasi-sixfold axes. The naked capsid interacts with the host receptor HAVCR1 to provide virion attachment to and probably entry into the target cell. In terms of biological role, VP0 precursor is a component of the immature procapsids. Functionally, plays a role in the assembly of the 12 pentamers into an icosahedral structure. Has not been detected in mature virions, supposedly owing to its small size. Precursor component of immature procapsids that corresponds to an extended form of the structural protein VP1. After maturation, possibly by the host Cathepsin L, the assembly signal 2A is cleaved to give rise to the mature VP1 protein. Its function is as follows. Functions as a viroporin. Affects membrane integrity and causes an increase in membrane permeability. Involved in host intracellular membrane rearrangements probably to give rise to the viral factories. Does not disrupt calcium homeostasis or glycoprotein trafficking. Antagonizes the innate immune response of the host by suppressing IFN-beta synthesis, which it achieves by interfering with the RIG-I/IFIH1 pathway. In terms of biological role, affects membrane integrity and causes an increase in membrane permeability. Functionally, associates with and induces structural rearrangements of intracellular membranes. Displays RNA-binding activity. The precursor 3ABC is targeted to the mitochondrial membrane where protease 3C activity cleaves and inhibits the host antiviral protein MAVS, thereby disrupting activation of IRF3 through the IFIH1/MDA5 pathway. In vivo, the protease activity of 3ABC precursor is more efficient in cleaving the 2BC precursor than that of protein 3C. The 3ABC precursor may therefore play a role in the proteolytic processing of the polyprotein. Possible viroporin. Its function is as follows. Interacts with the 3CD precursor and with RNA structures found at both the 5'- and 3'-termini of the viral genome. Since the 3AB precursor contains the hydrophobic domain 3A, it probably anchors the whole viral replicase complex to intracellular membranes on which viral RNA synthesis occurs. In terms of biological role, may serve as membrane anchor to the 3AB and 3ABC precursors via its hydrophobic domain. May interact with RNA. Functionally, acts as a primer for viral RNA replication and remains covalently bound to viral genomic RNA. VPg is uridylylated prior to priming replication into VPg-pUpU. The VPg-pUpU is then used as primer on the genomic RNA poly(A) by the RNA-dependent RNA polymerase to replicate the viral genome. Cysteine protease that generates mature viral proteins from the precursor polyprotein. In addition to its proteolytic activity, it binds to viral RNA, and thus influences viral genome replication. RNA and substrate bind cooperatively to the protease. Cleaves IKBKG/NEMO to impair innate immune signaling. Cleaves host PABPC1 which may participate in the switch of viral translation to RNA synthesis. Its function is as follows. Interacts with the 3AB precursor and with RNA structures found at both the 5'- and 3'-termini of the viral genome. Disrupts TLR3 signaling by degrading the host adapter protein TICAM1/TRIF. In terms of biological role, RNA-directed RNA polymerase 3D-POL replicates genomic and antigenomic RNA by recognizing replications specific signals. The protein is Genome polyprotein of Human hepatitis A virus genotype IIB (isolate SLF88) (HHAV).